We begin with the raw amino-acid sequence, 424 residues long: Serine--tRNA ligase (424 aa).

T229–E231 lines the L-serine pocket. ATP contacts are provided by residues R260–E262 and V276. An L-serine-binding site is contributed by E283. E347–S350 contacts ATP. T383 provides a ligand contact to L-serine.

It belongs to the class-II aminoacyl-tRNA synthetase family. Type-1 seryl-tRNA synthetase subfamily. As to quaternary structure, homodimer. The tRNA molecule binds across the dimer.

It localises to the cytoplasm. It carries out the reaction tRNA(Ser) + L-serine + ATP = L-seryl-tRNA(Ser) + AMP + diphosphate + H(+). It catalyses the reaction tRNA(Sec) + L-serine + ATP = L-seryl-tRNA(Sec) + AMP + diphosphate + H(+). It participates in aminoacyl-tRNA biosynthesis; selenocysteinyl-tRNA(Sec) biosynthesis; L-seryl-tRNA(Sec) from L-serine and tRNA(Sec): step 1/1. Catalyzes the attachment of serine to tRNA(Ser). Is also able to aminoacylate tRNA(Sec) with serine, to form the misacylated tRNA L-seryl-tRNA(Sec), which will be further converted into selenocysteinyl-tRNA(Sec). In Methanosphaera stadtmanae (strain ATCC 43021 / DSM 3091 / JCM 11832 / MCB-3), this protein is Serine--tRNA ligase.